Consider the following 258-residue polypeptide: UPF0246 protein NTHI1156 (258 aa).

This sequence belongs to the UPF0246 family.

This chain is UPF0246 protein NTHI1156, found in Haemophilus influenzae (strain 86-028NP).